Consider the following 160-residue polypeptide: Thialysine N-epsilon-acetyltransferase (160 aa).

The N-acetyltransferase domain occupies Phe-4–Asp-159. Acetyl-CoA contacts are provided by residues Leu-84–Ile-86, Arg-92–Arg-97, Asn-123–Ala-126, and Tyr-130–Val-133.

The protein belongs to the acetyltransferase family. Homodimer.

It carries out the reaction S-(2-aminoethyl)-L-cysteine + acetyl-CoA = S-(2-acetamidoethyl)-L-cysteine + CoA + H(+). The catalysed reaction is O-(2-aminoethyl)-L-serine + acetyl-CoA = O-(2-acetamidoethyl)-L-serine + CoA + H(+). The enzyme catalyses S-(2-aminoethyl)-homocysteine + acetyl-CoA = S-(2-acetamidoethyl)-homocysteine + CoA + H(+). In terms of biological role, catalyzes the N-acetylation of the amino acid thialysine (S-(2-aminoethyl)-L-cysteine), a L-lysine analog with the 4-methylene group substituted with a sulfur. Substrate specificity: thialysine &gt; O-(2-aminoethyl)-L-serine &gt; S-(2-aminoethyl)-D,L-homocysteine. Does not act on polyamines, such as spermidine and spermine, nor on diamines putrescine and cadaverine. In Caenorhabditis elegans, this protein is Thialysine N-epsilon-acetyltransferase.